Here is a 154-residue protein sequence, read N- to C-terminus: Urease accessory protein UreE (154 aa).

Belongs to the UreE family.

The protein localises to the cytoplasm. Its function is as follows. Involved in urease metallocenter assembly. Binds nickel. Probably functions as a nickel donor during metallocenter assembly. The sequence is that of Urease accessory protein UreE from Rhizobium meliloti (strain 1021) (Ensifer meliloti).